A 1196-amino-acid polypeptide reads, in one-letter code: Major DNA-binding protein (1196 aa).

A zinc finger spans residues 499–512 (CNLCTFDTRHACVH). 2 short sequence motifs (required for filament formation) span residues 843–844 (FW) and 1142–1144 (FNF). The segment at 1158-1196 (GGPGAPGPAFAGRKRAFHGDDPFGEGPPDKKGDLTLDML) is disordered. Residues 1170–1196 (RKRAFHGDDPFGEGPPDKKGDLTLDML) are required for nuclear localization. Residues 1174-1196 (FHGDDPFGEGPPDKKGDLTLDML) are compositionally biased toward basic and acidic residues.

This sequence belongs to the herpesviridae major DNA-binding protein family. In terms of assembly, homooligomers. Forms double-helical filaments necessary for the formation of replication compartments within the host nucleus. Interacts with the origin-binding protein. Interacts with the helicase primase complex; this interaction stimulates primer synthesis activity of the helicase-primase complex. Interacts with the DNA polymerase. Interacts with the alkaline exonuclease; this interaction increases its nuclease processivity.

The protein localises to the host nucleus. In terms of biological role, plays several crucial roles in viral infection. Participates in the opening of the viral DNA origin to initiate replication by interacting with the origin-binding protein. May disrupt loops, hairpins and other secondary structures present on ssDNA to reduce and eliminate pausing of viral DNA polymerase at specific sites during elongation. Promotes viral DNA recombination by performing strand-transfer, characterized by the ability to transfer a DNA strand from a linear duplex to a complementary single-stranded DNA circle. Can also catalyze the renaturation of complementary single strands. Additionally, reorganizes the host cell nucleus, leading to the formation of prereplicative sites and replication compartments. This process is driven by the protein which can form double-helical filaments in the absence of DNA. The protein is Major DNA-binding protein of Human herpesvirus 1 (strain KOS) (HHV-1).